The sequence spans 196 residues: Homeobox protein ANF-1 (196 aa).

A DNA-binding region (homeobox) is located at residues 119 to 178 (GRRPRTAFTRNQIEVLENVFKMNSYPGIDIREELARKLDLEEDRIQIWFQNRRAKLKRSH).

Belongs to the ANF homeobox family.

Its subcellular location is the nucleus. In terms of biological role, may be involved in the early patterning of the most anterior region of the main embryonic body axis. This is Homeobox protein ANF-1 from Gallus gallus (Chicken).